Here is a 299-residue protein sequence, read N- to C-terminus: Regucalcin (299 aa).

A divalent metal cation is bound at residue glutamate 18. 3 residues coordinate substrate: arginine 101, asparagine 103, and glutamate 121. Residue lysine 144 is modified to N6-succinyllysine. Residues asparagine 154 and aspartate 204 each contribute to the a divalent metal cation site. Aspartate 204 acts as the Proton donor/acceptor in catalysis. 2 positions are modified to N6-succinyllysine: lysine 244 and lysine 253.

It belongs to the SMP-30/CGR1 family. In terms of assembly, monomer. Zn(2+) is required as a cofactor. Requires Mn(2+) as cofactor. The cofactor is Ca(2+). It depends on Mg(2+) as a cofactor.

The protein resides in the cytoplasm. It carries out the reaction D-glucono-1,5-lactone + H2O = D-gluconate + H(+). The protein operates within cofactor biosynthesis; L-ascorbate biosynthesis via UDP-alpha-D-glucuronate pathway; L-ascorbate from UDP-alpha-D-glucuronate: step 3/4. Gluconolactonase with low activity towards other sugar lactones, including gulonolactone and galactonolactone. Catalyzes a key step in ascorbic acid (vitamin C) biosynthesis. Can also hydrolyze diisopropyl phosphorofluoridate and phenylacetate (in vitro). Calcium-binding protein. Modulates Ca(2+) signaling, and Ca(2+)-dependent cellular processes and enzyme activities. This is Regucalcin (RGN) from Oryctolagus cuniculus (Rabbit).